The following is a 20-amino-acid chain: Basic phospholipase A2 cannitoxin alpha chain (20 aa).

Heterotrimer of alpha, beta, and gamma chains; non-covalently linked. Ca(2+) is required as a cofactor. Expressed by the venom gland.

Its subcellular location is the secreted. It carries out the reaction a 1,2-diacyl-sn-glycero-3-phosphocholine + H2O = a 1-acyl-sn-glycero-3-phosphocholine + a fatty acid + H(+). Its function is as follows. Heterotrimer: Snake venom phospholipase A2 (PLA2) heterotrimer that acts as a potent presynaptic neurotoxin by blocking synaptic transmission and synaptic vesicle recycling. Enzymatic activity is essential for the neurotoxic effects. May act by binding in a calcium-dependent fashion to neurotonal pentraxin-1 (NPTX1) and neurotonal pentraxin-2 (NPTX2), but not to neuronal pentraxin receptor (NPTXR). Also binds to taipoxin-associated calcium binding protein 49 (RCN2), a protein localized in the lumen of endoplasmic reticulum. Functionally, monomer (alpha chain): Snake venom phospholipase A2 (PLA2) that possesses a low level of presynaptic activity and the same high enzymatic activity than the heterotrimer. PLA2 catalyzes the calcium-dependent hydrolysis of the 2-acyl groups in 3-sn-phosphoglycerides. The chain is Basic phospholipase A2 cannitoxin alpha chain from Oxyuranus scutellatus canni (Papuan taipan).